A 338-amino-acid chain; its full sequence is Ketol-acid reductoisomerase (NADP(+)) (338 aa).

One can recognise a KARI N-terminal Rossmann domain in the interval 1–181 (MNVYYDKDCD…GGGRSGIIET (181 aa)). NADP(+) contacts are provided by residues 24–27 (YGSQ), arginine 47, serine 50, serine 52, and 82–85 (DEFQ). Residue histidine 107 is part of the active site. Position 133 (glycine 133) interacts with NADP(+). One can recognise a KARI C-terminal knotted domain in the interval 182–327 (TFKDETETDL…AKLRGMMPWI (146 aa)). Mg(2+) contacts are provided by aspartate 190, glutamate 194, glutamate 226, and glutamate 230. Substrate is bound at residue serine 251.

Belongs to the ketol-acid reductoisomerase family. The cofactor is Mg(2+).

The catalysed reaction is (2R)-2,3-dihydroxy-3-methylbutanoate + NADP(+) = (2S)-2-acetolactate + NADPH + H(+). The enzyme catalyses (2R,3R)-2,3-dihydroxy-3-methylpentanoate + NADP(+) = (S)-2-ethyl-2-hydroxy-3-oxobutanoate + NADPH + H(+). Its pathway is amino-acid biosynthesis; L-isoleucine biosynthesis; L-isoleucine from 2-oxobutanoate: step 2/4. The protein operates within amino-acid biosynthesis; L-valine biosynthesis; L-valine from pyruvate: step 2/4. Its function is as follows. Involved in the biosynthesis of branched-chain amino acids (BCAA). Catalyzes an alkyl-migration followed by a ketol-acid reduction of (S)-2-acetolactate (S2AL) to yield (R)-2,3-dihydroxy-isovalerate. In the isomerase reaction, S2AL is rearranged via a Mg-dependent methyl migration to produce 3-hydroxy-3-methyl-2-ketobutyrate (HMKB). In the reductase reaction, this 2-ketoacid undergoes a metal-dependent reduction by NADPH to yield (R)-2,3-dihydroxy-isovalerate. This Psychrobacter cryohalolentis (strain ATCC BAA-1226 / DSM 17306 / VKM B-2378 / K5) protein is Ketol-acid reductoisomerase (NADP(+)).